We begin with the raw amino-acid sequence, 747 residues long: Protein O-mannosyl-transferase 1 (747 aa).

7 consecutive transmembrane segments (helical) span residues 30–50, 90–110, 121–141, 176–196, 205–225, 228–248, and 267–287; these read PLVV…LGLL, FGHM…NFLW, VPVW…VPMA, LLES…LKFF, SVHW…AVGI, MGIF…WHLI, and VALL…HLML. 3 MIR domains span residues 318-381, 392-449, and 453-513; these read PLEV…VKDP, PRPV…LDIV, and SNQD…VEEH. Residues asparagine 435, asparagine 471, and asparagine 539 are each glycosylated (N-linked (GlcNAc...) asparagine). Transmembrane regions (helical) follow at residues 597–617, 636–656, and 660–680; these read IVIW…FFWY, WVLA…PFFL, and MLFL…LPIV.

It belongs to the glycosyltransferase 39 family.

Its subcellular location is the endoplasmic reticulum membrane. It catalyses the reaction a di-trans,poly-cis-dolichyl beta-D-mannosyl phosphate + L-seryl-[protein] = 3-O-(alpha-D-mannosyl)-L-seryl-[protein] + a di-trans,poly-cis-dolichyl phosphate + H(+). It carries out the reaction a di-trans,poly-cis-dolichyl beta-D-mannosyl phosphate + L-threonyl-[protein] = 3-O-(alpha-D-mannosyl)-L-threonyl-[protein] + a di-trans,poly-cis-dolichyl phosphate + H(+). It participates in protein modification; protein glycosylation. Its function is as follows. Transfers mannosyl residues to the hydroxyl group of serine or threonine residues. Coexpression of both POMT1 and POMT2 is necessary for enzyme activity, expression of either POMT1 or POMT2 alone is insufficient. Essentially dedicated to O-mannosylation of alpha-DAG1 and few other proteins but not of cadherins and protocaherins. This Rattus norvegicus (Rat) protein is Protein O-mannosyl-transferase 1 (Pomt1).